Consider the following 149-residue polypeptide: Large ribosomal subunit protein uL13 (149 aa).

The protein belongs to the universal ribosomal protein uL13 family. Part of the 50S ribosomal subunit.

In terms of biological role, this protein is one of the early assembly proteins of the 50S ribosomal subunit, although it is not seen to bind rRNA by itself. It is important during the early stages of 50S assembly. The polypeptide is Large ribosomal subunit protein uL13 (Borrelia recurrentis (strain A1)).